We begin with the raw amino-acid sequence, 578 residues long: Oxygen sensor histidine kinase response regulator DevS/DosS (578 aa).

2 GAF domains span residues 63 to 200 (DLEA…GIAV) and 231 to 369 (EPAT…ALAW). Position 149 (His149) interacts with heme. In terms of domain architecture, Histidine kinase spans 383–578 (VLTDRDRIAR…VLRWSAPLSQ (196 aa)). His395 carries the phosphohistidine; by autocatalysis modification.

Mg(2+) serves as cofactor. It depends on heme as a cofactor.

It localises to the cytoplasm. It carries out the reaction ATP + protein L-histidine = ADP + protein N-phospho-L-histidine.. Functionally, member of the two-component regulatory system DevR/DevS (DosR/DosS) involved in onset of the dormancy response. Regulates an approximately 48-member regulon. Required for full induction of the DevR (DosR) regulon; acts later than DosT to positively regulate expression of the DevR regulon during adaptation to anaerobiosis. Characterized as an oxygen sensor; O(2) acts as a switch, with O(2)-bound Fe(2+) protein inactive in autophosphorylation. Has also been suggested to act as a redox sensor, or perhaps as a dual oxygen/redox sensor. Donates a phosphate group to transcriptional regulator DevR (DosR). The sequence is that of Oxygen sensor histidine kinase response regulator DevS/DosS (devS) from Mycobacterium tuberculosis (strain CDC 1551 / Oshkosh).